We begin with the raw amino-acid sequence, 264 residues long: Adenosylcobinamide-GDP ribazoletransferase (264 aa).

A run of 6 helical transmembrane segments spans residues isoleucine 39 to isoleucine 59, alanine 63 to threonine 83, alanine 121 to leucine 141, leucine 148 to leucine 168, leucine 201 to leucine 221, and valine 241 to alanine 261.

It belongs to the CobS family. Requires Mg(2+) as cofactor.

The protein resides in the cell inner membrane. The catalysed reaction is alpha-ribazole + adenosylcob(III)inamide-GDP = adenosylcob(III)alamin + GMP + H(+). The enzyme catalyses alpha-ribazole 5'-phosphate + adenosylcob(III)inamide-GDP = adenosylcob(III)alamin 5'-phosphate + GMP + H(+). Its pathway is cofactor biosynthesis; adenosylcobalamin biosynthesis; adenosylcobalamin from cob(II)yrinate a,c-diamide: step 7/7. Functionally, joins adenosylcobinamide-GDP and alpha-ribazole to generate adenosylcobalamin (Ado-cobalamin). Also synthesizes adenosylcobalamin 5'-phosphate from adenosylcobinamide-GDP and alpha-ribazole 5'-phosphate. This is Adenosylcobinamide-GDP ribazoletransferase from Azorhizobium caulinodans (strain ATCC 43989 / DSM 5975 / JCM 20966 / LMG 6465 / NBRC 14845 / NCIMB 13405 / ORS 571).